A 260-amino-acid polypeptide reads, in one-letter code: Thiazole synthase (260 aa).

The Schiff-base intermediate with DXP role is filled by Lys102. 1-deoxy-D-xylulose 5-phosphate contacts are provided by residues Gly163, 189 to 190 (AG), and 211 to 212 (NT).

The protein belongs to the ThiG family. As to quaternary structure, homotetramer. Forms heterodimers with either ThiH or ThiS.

The protein resides in the cytoplasm. It carries out the reaction [ThiS sulfur-carrier protein]-C-terminal-Gly-aminoethanethioate + 2-iminoacetate + 1-deoxy-D-xylulose 5-phosphate = [ThiS sulfur-carrier protein]-C-terminal Gly-Gly + 2-[(2R,5Z)-2-carboxy-4-methylthiazol-5(2H)-ylidene]ethyl phosphate + 2 H2O + H(+). The protein operates within cofactor biosynthesis; thiamine diphosphate biosynthesis. In terms of biological role, catalyzes the rearrangement of 1-deoxy-D-xylulose 5-phosphate (DXP) to produce the thiazole phosphate moiety of thiamine. Sulfur is provided by the thiocarboxylate moiety of the carrier protein ThiS. In vitro, sulfur can be provided by H(2)S. The sequence is that of Thiazole synthase from Geobacter metallireducens (strain ATCC 53774 / DSM 7210 / GS-15).